The sequence spans 56 residues: Cytochrome b-c1 complex subunit 10 (56 aa).

Residues 1-16 (MLSRFLGPRYRELARN) lie on the Mitochondrial matrix side of the membrane. The chain crosses the membrane as a helical span at residues 17-38 (WIPTAGMWGTVGAVGLVWATDW). The Mitochondrial intermembrane portion of the chain corresponds to 39 to 56 (RLILDWVPYINGKFKKDD).

It belongs to the UQCR11/QCR10 family. In terms of assembly, component of the ubiquinol-cytochrome c oxidoreductase (cytochrome b-c1 complex, complex III, CIII), a multisubunit enzyme composed of 11 subunits. The complex is composed of 3 respiratory subunits cytochrome b, cytochrome c1 and Rieske protein UQCRFS1, 2 core protein subunits UQCRC1/QCR1 and UQCRC2/QCR2, and 6 low-molecular weight protein subunits UQCRH/QCR6, UQCRB/QCR7, UQCRQ/QCR8, UQCR10/QCR9, UQCR11/QCR10 and subunit 9, the cleavage product of Rieske protein UQCRFS1. The complex exists as an obligatory dimer and forms supercomplexes (SCs) in the inner mitochondrial membrane with NADH-ubiquinone oxidoreductase (complex I, CI) and cytochrome c oxidase (complex IV, CIV), resulting in different assemblies (supercomplex SCI(1)III(2)IV(1) and megacomplex MCI(2)III(2)IV(2)).

Its subcellular location is the mitochondrion inner membrane. In terms of biological role, component of the ubiquinol-cytochrome c oxidoreductase, a multisubunit transmembrane complex that is part of the mitochondrial electron transport chain which drives oxidative phosphorylation. The respiratory chain contains 3 multisubunit complexes succinate dehydrogenase (complex II, CII), ubiquinol-cytochrome c oxidoreductase (cytochrome b-c1 complex, complex III, CIII) and cytochrome c oxidase (complex IV, CIV), that cooperate to transfer electrons derived from NADH and succinate to molecular oxygen, creating an electrochemical gradient over the inner membrane that drives transmembrane transport and the ATP synthase. The cytochrome b-c1 complex catalyzes electron transfer from ubiquinol to cytochrome c, linking this redox reaction to translocation of protons across the mitochondrial inner membrane, with protons being carried across the membrane as hydrogens on the quinol. In the process called Q cycle, 2 protons are consumed from the matrix, 4 protons are released into the intermembrane space and 2 electrons are passed to cytochrome c. QCR10 has a role in CIII assembly and RIP1 stability. The polypeptide is Cytochrome b-c1 complex subunit 10 (Uqcr11) (Mus musculus (Mouse)).